The sequence spans 914 residues: Chitin synthase B (914 aa).

Disordered regions lie at residues 1–67 (MAYQ…TSGY) and 112–140 (YARSETSSTEAWRQRQAPGGAGSGGGGGL). Over residues 130-140 (GGAGSGGGGGL) the composition is skewed to gly residues. 7 consecutive transmembrane segments (helical) span residues 543–562 (WLNGSFAAGIYSLMHFGRMY), 586–606 (ILTWFSLASYWLTTSVIMDLV), 627–647 (IVNTIVKYAYLGFLLLQFILA), 662–682 (SFVVFGIIQLYVVVDALYLVV), 712–732 (AGIIIIALAATFGLYFVASFM), 843–863 (LVTFWIFSNALMAVCITSDGV), and 882–902 (ALLWSNAVVALFRFIGACWFL).

Belongs to the chitin synthase family. Class III subfamily.

It is found in the cell membrane. The enzyme catalyses [(1-&gt;4)-N-acetyl-beta-D-glucosaminyl](n) + UDP-N-acetyl-alpha-D-glucosamine = [(1-&gt;4)-N-acetyl-beta-D-glucosaminyl](n+1) + UDP + H(+). Functionally, polymerizes chitin, a structural polymer of the cell wall and septum, by transferring the sugar moiety of UDP-GlcNAc to the non-reducing end of the growing chitin polymer. Plays an important role in septal growth or maintenance. Mediates colony spore formation. The protein is Chitin synthase B of Aspergillus niger (strain ATCC MYA-4892 / CBS 513.88 / FGSC A1513).